Reading from the N-terminus, the 274-residue chain is MGRSPCCEKDHTNKGAWTKEEDDKLISYIKAHGEGCWRSLPRSAGLQRCGKSCRLRWINYLRPDLKRGNFTLEEDDLIIKLHSLLGNKWSLIATRLPGRTDNEIKNYWNTHVKRKLLRKGIDPATHRPINETKTSQDSSDSSKTEDPLVKILSFGPQLEKIANFGDERIQKRVEYSVVEERCLDLNLELRISPPWQDKLHDERNLRFGRVKYRCSACRFGFGNGKECSCNNVKCQTEDSSSSSYSSTDISSSIGYDFLGLNNTRVLDFSTLEMK.

HTH myb-type domains lie at 9-61 (KDHT…INYL) and 62-116 (RPDL…KRKL). DNA-binding regions (H-T-H motif) lie at residues 37–61 (WRSL…INYL) and 89–112 (WSLI…NTHV). The tract at residues 123–144 (PATHRPINETKTSQDSSDSSKT) is disordered.

Mostly expressed in roots, and, to a lower extent, in stems, flower buds, and siliques.

It localises to the nucleus. The polypeptide is Transcription factor MYB32 (MYB32) (Arabidopsis thaliana (Mouse-ear cress)).